We begin with the raw amino-acid sequence, 1108 residues long: Activity-dependent neuroprotector homeobox protein (1108 aa).

A binds to beta-catenin/CTNNB1 region spans residues 1 to 685 (MFQLPVNNLG…ASTITLHLVH (685 aa)). Residues lysine 39 and lysine 72 each participate in a glycyl lysine isopeptide (Lys-Gly) (interchain with G-Cter in SUMO2) cross-link. The segment at 74–97 (FCCSACPFSSKFFSAYKSHFRNVH) adopts a C2H2-type 1; degenerate zinc-finger fold. A Phosphoserine modification is found at serine 98. A C2H2-type 2; degenerate zinc finger spans residues 107-129 (LNCPYCTFNADKKTLETHIKIFH). The interval 133–154 (SSAPSSSLSTFKDKNKNDGLKP) is disordered. A compositionally biased stretch (basic and acidic residues) spans 143-154 (FKDKNKNDGLKP). Glycyl lysine isopeptide (Lys-Gly) (interchain with G-Cter in SUMO2) cross-links involve residues lysine 144 and lysine 155. A C2H2-type 3; degenerate zinc finger spans residues 165–188 (YYCKKCTYRDPLYEIVRKHIYREH). Residues lysine 203, lysine 231, lysine 266, lysine 274, lysine 278, lysine 279, lysine 311, and lysine 335 each participate in a glycyl lysine isopeptide (Lys-Gly) (interchain with G-Cter in SUMO2) cross-link. The C2H2-type 4; degenerate zinc finger occupies 221–244 (IHCKRCLFMPKSYEALVQHVIEDH). Asymmetric dimethylarginine is present on arginine 348. The segment at 354–361 (NAPVSIPQ) is neuroprotective peptide; contributes to CTNNB1-binding, but less effective than whole N-terminal region. The segment at 360–438 (PQQSQSVKQL…PAATGPPPSN (79 aa)) is disordered. Residues lysine 367 and lysine 407 each participate in a glycyl lysine isopeptide (Lys-Gly) (interchain with G-Cter in SUMO2) cross-link. Positions 393 to 422 (SLQTANTSLPPGQVKSPSVSQSQASRVLGQ) are enriched in polar residues. Phosphoserine occurs at positions 408 and 412. Residue lysine 426 forms a Glycyl lysine isopeptide (Lys-Gly) (interchain with G-Cter in SUMO2) linkage. The span at 426–437 (KPPPAATGPPPS) shows a compositional bias: pro residues. The C2H2-type 5; atypical zinc-finger motif lies at 446–468 (KICTICNELFPENVYSVHFEKEH). 2 C2H2-type zinc fingers span residues 488 to 509 (SKCLYCNRYLPTDTLLNHMLIH) and 511 to 534 (LSCPYCRSTFNDVEKMAAHMRMVH). Residues lysine 599 and lysine 605 each participate in a glycyl lysine isopeptide (Lys-Gly) (interchain with G-Cter in SUMO2) cross-link. Serine 607 carries the post-translational modification Phosphoserine. Glycyl lysine isopeptide (Lys-Gly) (interchain with G-Cter in SUMO2) cross-links involve residues lysine 615, lysine 620, lysine 631, and lysine 657. The segment at 621-646 (TLCPLCFSILKGPISDALAHHLRERH) adopts a C2H2-type 8; atypical zinc-finger fold. The C2H2-type 9; atypical zinc finger occupies 661-685 (YKCIHCLGVYTSNMTASTITLHLVH). Residues 690 to 711 (GKTQNGQDKTNAPSRLNQSPGL) are disordered. The segment covering 691-709 (KTQNGQDKTNAPSRLNQSP) has biased composition (polar residues). Residue lysine 698 forms a Glycyl lysine isopeptide (Lys-Gly) (interchain with G-Cter in SUMO2) linkage. The residue at position 708 (serine 708) is a Phosphoserine. Glycyl lysine isopeptide (Lys-Gly) (interchain with G-Cter in SUMO2) cross-links involve residues lysine 715, lysine 727, and lysine 730. Residue serine 737 is modified to Phosphoserine. Residue lysine 744 forms a Glycyl lysine isopeptide (Lys-Gly) (interchain with G-Cter in SUMO2) linkage. The segment at residues 753 to 813 (LDPKGHEDDS…SNKRKKCVRD (61 aa)) is a DNA-binding region (homeobox). Serine 804 is subject to Phosphoserine. Glycyl lysine isopeptide (Lys-Gly) (interchain with G-Cter in SUMO2) cross-links involve residues lysine 806, lysine 828, and lysine 834. Over residues 851 to 880 (KDSRVNASKTVDKKHNLGKEDDSFSDSFEH) the composition is skewed to basic and acidic residues. The tract at residues 851–1037 (KDSRVNASKT…DTEQLKWKNS (187 aa)) is disordered. A phosphoserine mark is found at serine 875, serine 877, serine 885, serine 888, and serine 904. Glycyl lysine isopeptide (Lys-Gly) (interchain with G-Cter in SUMO2) cross-links involve residues lysine 913, lysine 928, and lysine 941. Acidic residues predominate over residues 928–938 (KEEEEEEEEED). A compositionally biased stretch (basic and acidic residues) spans 939–959 (GSKYETIHLTEEPAKLMHDAS). Phosphoserine is present on residues serine 959 and serine 961. Residues 977-988 (PSESGPGSQQIS) show a composition bias toward polar residues. Residue lysine 1022 forms a Glycyl lysine isopeptide (Lys-Gly) (interchain with G-Cter in SUMO2) linkage. Lysine 1041 and lysine 1048 each carry N6-acetyllysine; alternate. Glycyl lysine isopeptide (Lys-Gly) (interchain with G-Cter in SUMO2); alternate cross-links involve residues lysine 1041 and lysine 1048. The interval 1050–1108 (QSQWENASENAERLPNPQIEWQNSTIDSEDGEQFDSMTDGVADPMHGSLTGVKLSSQQA) is disordered. At serine 1077 the chain carries Phosphoserine.

Interacts (via N-terminal region) with beta-catenin/CTNNB1 (via the central armadillo domains); interaction is direct and stabilizes CTNNB1 by modulating its phosphorylation by glycogen synthase kinase-3 beta GSK3B. As to expression, expressed in the brain, with a higher expression in cerebellum and hippocampus. Weakly expressed in lung, kidney and intestine, and expressed at intermediate level in testis.

The protein localises to the nucleus. The protein resides in the chromosome. Functionally, may be involved in transcriptional regulation. May mediate some of the neuroprotective peptide VIP-associated effects involving normal growth and cancer proliferation. Positively modulates WNT-beta-catenin/CTNN1B signaling, acting by regulating phosphorylation of, and thereby stabilizing, CTNNB1. May be required for neural induction and neuronal differentiation. May be involved in erythroid differentiation. The protein is Activity-dependent neuroprotector homeobox protein (Adnp) of Mus musculus (Mouse).